A 235-amino-acid chain; its full sequence is Ribosomal RNA large subunit methyltransferase E (235 aa).

Residues Gly76, Trp78, Asp99, Asp115, and Asp139 each coordinate S-adenosyl-L-methionine. Lys179 (proton acceptor) is an active-site residue.

Belongs to the class I-like SAM-binding methyltransferase superfamily. RNA methyltransferase RlmE family.

It is found in the cytoplasm. The enzyme catalyses uridine(2552) in 23S rRNA + S-adenosyl-L-methionine = 2'-O-methyluridine(2552) in 23S rRNA + S-adenosyl-L-homocysteine + H(+). Functionally, specifically methylates the uridine in position 2552 of 23S rRNA at the 2'-O position of the ribose in the fully assembled 50S ribosomal subunit. The chain is Ribosomal RNA large subunit methyltransferase E from Rhodopseudomonas palustris (strain BisA53).